Here is a 413-residue protein sequence, read N- to C-terminus: Coiled-coil domain-containing protein 83 (413 aa).

Coiled-coil stretches lie at residues 32–186 and 215–255; these read HCQI…RIIR and IWEN…QLFN.

This is Coiled-coil domain-containing protein 83 (CCDC83) from Bos taurus (Bovine).